The sequence spans 120 residues: Large ribosomal subunit protein uL18 (120 aa).

It belongs to the universal ribosomal protein uL18 family. In terms of assembly, part of the 50S ribosomal subunit; part of the 5S rRNA/L5/L18/L25 subcomplex. Contacts the 5S and 23S rRNAs.

In terms of biological role, this is one of the proteins that bind and probably mediate the attachment of the 5S RNA into the large ribosomal subunit, where it forms part of the central protuberance. This is Large ribosomal subunit protein uL18 from Exiguobacterium sp. (strain ATCC BAA-1283 / AT1b).